Here is a 1359-residue protein sequence, read N- to C-terminus: Transcriptional regulator ATRX homolog (1359 aa).

The segment at 1–402 (MRVGVSESED…RAEKERRKRL (402 aa)) is disordered. Residues 11–49 (SDGHVIEDEDLEMARQIENERKEKRAQKLKEKREREGKP) show a composition bias toward basic and acidic residues. A compositionally biased stretch (basic residues) spans 50-61 (PPKKRPAKKRKA). Over residues 64–73 (SEEDDDDEEE) the composition is skewed to acidic residues. Basic residues-rich tracts occupy residues 77–86 (KSSKKSRKRA), 103–123 (KSKS…KKRT), 139–149 (KSKKKSKKTKK), 165–177 (VKKS…KSVK), 194–204 (KKSKKGLKKKA), and 219–229 (KKSKKKSKKVV). Acidic residues predominate over residues 257–271 (ESSESEKSDEEEEEK). Residues 321–336 (KDQKSESEASDVEEKV) are compositionally biased toward basic and acidic residues. Positions 347–357 (SESGSDSSEGS) are enriched in low complexity. Residues 362–376 (RKSKKKEKPEKKKKG) are compositionally biased toward basic residues. Positions 383 to 397 (KLQKETIDAERAEKE) are enriched in basic and acidic residues. The region spanning 483-685 (DRLDTEGSGG…HCMVNFVKPG (203 aa)) is the Helicase ATP-binding domain. 496–503 (HCMGLGKT) is a binding site for ATP. The DEAH box signature appears at 636–639 (DEAH). The segment at 809–891 (RVMREDAEEE…NSDDEDEEDG (83 aa)) is disordered. Over residues 814–832 (DAEEEADFIDDGDGSESES) the composition is skewed to acidic residues. Residues 833-847 (EGSFKSGSESDSGKS) are compositionally biased toward low complexity. The Helicase C-terminal domain occupies 951–1134 (LLVEIIKKCE…EAQIQRHYLG (184 aa)).

This sequence belongs to the SNF2/RAD54 helicase family.

The protein localises to the nucleus. It catalyses the reaction ATP + H2O = ADP + phosphate + H(+). Required for embryonic development and gonadogenesis. Also, functions redundantly with the transcriptional repressor lin-35 to regulate somatic gonad development. This Caenorhabditis elegans protein is Transcriptional regulator ATRX homolog.